The sequence spans 242 residues: Zinc-finger homeodomain protein 13 (242 aa).

Residues 64–111 (YYECRKNHAADIGTTAYDGCGEFVSSTGEEDSLNCAACGCHRNFHREE) form a ZF-HD dimerization-type; degenerate zinc finger. The disordered stretch occupies residues 144–166 (GGKSEGKKKKKEKESYGGDPIIK). Basic and acidic residues predominate over residues 155 to 166 (EKESYGGDPIIK). Residues 179 to 238 (VKRLKTKFTAEQTEKMRDYAEKLRWKVRPERQEEVEEFCVEIGVNRKNFRIWMNNHKDKI) constitute a DNA-binding region (homeobox).

As to quaternary structure, homo- and heterodimer with other ZFHD proteins. Interacts with MIF1, MIF2 and MIF3; these interactions prevent nuclear localization and DNA-binding to inhibit transcription regulation activity. Binds to ZHD11. In terms of tissue distribution, mostly expressed in flowers.

It localises to the nucleus. In terms of biological role, putative transcription factor. This Arabidopsis thaliana (Mouse-ear cress) protein is Zinc-finger homeodomain protein 13 (ZHD13).